A 421-amino-acid chain; its full sequence is Testin (421 aa).

The region spanning 92 to 199 (MILTNPVAAK…GDVKLPQEMD (108 aa)) is the PET domain. LIM zinc-binding domains lie at 234-297 (YSCY…CDSE), 299-359 (PRCA…NHAV), and 362-421 (QGCH…KMMS).

It belongs to the prickle / espinas / testin family. As to quaternary structure, interacts via LIM domain 1 with ZYX. Interacts (via LIM domain 3) with ENAH and VASP. Interacts with ALKBH4, talin, actin, alpha-actinin, GRIP1 and PXN. Interacts (via LIM domain 2) with ACTL7A (via N-terminus). Heterodimer with ACTL7A; the heterodimer interacts with ENAH to form a heterotrimer.

It is found in the cytoplasm. It localises to the cell junction. The protein localises to the focal adhesion. In terms of biological role, scaffold protein that may play a role in cell adhesion, cell spreading and in the reorganization of the actin cytoskeleton. Plays a role in the regulation of cell proliferation. May act as a tumor suppressor. This chain is Testin (TES), found in Loxodonta africana (African elephant).